A 359-amino-acid chain; its full sequence is Peptide chain release factor 1 (359 aa).

N5-methylglutamine is present on Gln-235.

This sequence belongs to the prokaryotic/mitochondrial release factor family. Post-translationally, methylated by PrmC. Methylation increases the termination efficiency of RF1.

The protein resides in the cytoplasm. Peptide chain release factor 1 directs the termination of translation in response to the peptide chain termination codons UAG and UAA. This chain is Peptide chain release factor 1, found in Polynucleobacter necessarius subsp. necessarius (strain STIR1).